We begin with the raw amino-acid sequence, 1200 residues long: SR-related and CTD-associated factor 4 (1200 aa).

One can recognise a CID domain in the interval 1 to 139; that stretch reads MDAVNAFNQE…PLLDMAAGTS (139 aa). Lys-49 carries the post-translational modification N6-acetyllysine. Over residues 140 to 153 the composition is skewed to polar residues; sequence NAAPGAENVTNNEG. Disordered regions lie at residues 140–172, 299–324, and 346–566; these read NAAP…PTNS, VPAS…MQQP, and SMQH…QIKS. At Ser-154 the chain carries Phosphoserine. Composition is skewed to pro residues over residues 367–390 and 399–461; these read APPP…PGMP and LPQP…PPVQ. A compositionally biased stretch (low complexity) spans 462-471; it reads PTFQPTFQPQ. Positions 493-503 are enriched in basic and acidic residues; the sequence is EVKRHVPESRK. Positions 504-541 are enriched in basic residues; it reads SRSRSPKRRRSRSGSRSRRSRHRRSRSRSRDRRRHSPR. The span at 543 to 558 shows a compositional bias: basic and acidic residues; the sequence is RSQERRDREKERERRQ. The region spanning 574-648 is the RRM domain; it reads TTLWVGQLDK…KSIKIAWALN (75 aa). Disordered stretches follow at residues 696 to 724, 834 to 875, and 927 to 1200; these read WKGI…VSPI, VSGA…SLLG, and PPHM…EAPR. At Ser-722 the chain carries Phosphoserine. Composition is skewed to pro residues over residues 856–868 and 927–958; these read PAAP…PPVT and PPHM…PPHG. Positions 965–978 are enriched in gly residues; it reads GMPGLGGPGPGPGG. Over residues 986–1036 the composition is skewed to low complexity; the sequence is QQQPQQQQQQQQQQQQQQQQQQQQPPPQQSQTQQQPAPSQQPAPAQQQPQQ. Ser-1058 is subject to Phosphoserine. Over residues 1063–1139 the composition is skewed to basic and acidic residues; the sequence is VENDRERYGS…RGKEKHEVAD (77 aa). Residues 1153-1162 are compositionally biased toward polar residues; that stretch reads QVGNTDTVSE. Residue Ser-1178 is modified to Phosphoserine.

Interacts with POLR2A; via C-terminal heptapeptide repeat domain (CTD) phosphorylated at 'Ser-2' and 'Ser-5'.

It is found in the nucleus. In terms of biological role, anti-terminator protein required to prevent early mRNA termination during transcription. Together with SCAF8, acts by suppressing the use of early, alternative poly(A) sites, thereby preventing the accumulation of non-functional truncated proteins. Mechanistically, associates with the phosphorylated C-terminal heptapeptide repeat domain (CTD) of the largest RNA polymerase II subunit (POLR2A), and subsequently binds nascent RNA upstream of early polyadenylation sites to prevent premature mRNA transcript cleavage and polyadenylation. Independently of SCAF8, also acts as a suppressor of transcriptional readthrough. The sequence is that of SR-related and CTD-associated factor 4 from Rattus norvegicus (Rat).